A 289-amino-acid chain; its full sequence is Secretory carrier-associated membrane protein (289 aa).

Positions 1 to 65 are disordered; that stretch reads MAGRYDPNPF…TSTDGKKKER (65 aa). Topologically, residues 1–123 are cytoplasmic; sequence MAGRYDPNPF…EIPIHLRTLQ (123 aa). Over residues 16 to 31 the composition is skewed to polar residues; sequence NPFSNPRSAASATNSR. Residues 59 to 98 adopt a coiled-coil conformation; that stretch reads DGKKKERDLQAKEAELRKREQEVRRKEEAIARAGIVIEEK. 4 helical membrane-spanning segments follow: residues 124–144, 156–176, 191–211, and 239–259; these read YVAF…VVSV, IWFL…ALWY, FGWF…AAVA, and IFYF…IWVI. Residues 260–289 are Cytoplasmic-facing; it reads QQVYMHFRGGGKTAEMKREAALGAMGAALR.

Belongs to the SCAMP family.

It is found in the cell membrane. The protein resides in the cytoplasmic vesicle. It localises to the secretory vesicle membrane. Probably involved in membrane trafficking. In Pisum sativum (Garden pea), this protein is Secretory carrier-associated membrane protein (PSAM2).